Consider the following 253-residue polypeptide: 5'-nucleotidase SurE (253 aa).

Asp-8, Asp-9, Ser-40, and Asn-93 together coordinate a divalent metal cation.

This sequence belongs to the SurE nucleotidase family. It depends on a divalent metal cation as a cofactor.

It localises to the cytoplasm. It catalyses the reaction a ribonucleoside 5'-phosphate + H2O = a ribonucleoside + phosphate. In terms of biological role, nucleotidase that shows phosphatase activity on nucleoside 5'-monophosphates. This Methylobacterium nodulans (strain LMG 21967 / CNCM I-2342 / ORS 2060) protein is 5'-nucleotidase SurE.